We begin with the raw amino-acid sequence, 290 residues long: Putative beta-lactamase HcpC (290 aa).

A signal peptide spans 1–25 (MLENVKKSFFRVLCLGALCLGGLMA). TPR repeat units follow at residues 29–62 (PKEL…KENS), 64–98 (CFNL…NYSN), 100–133 (CHLL…LKYA), 134–170 (EGCA…NDGD), 172–205 (CTIL…LKDS), 206–242 (PGCF…ENGG), and 244–278 (CFNL…GAKG). Disulfide bonds link Cys-56-Cys-64, Cys-92-Cys-100, Cys-128-Cys-136, Cys-164-Cys-172, Cys-200-Cys-208, Cys-236-Cys-244, and Cys-272-Cys-280.

The protein belongs to the hcp beta-lactamase family.

It localises to the secreted. It carries out the reaction a beta-lactam + H2O = a substituted beta-amino acid. May hydrolyze 6-aminopenicillinic acid and 7-aminocephalosporanic acid (ACA) derivatives. The protein is Putative beta-lactamase HcpC (hcpC) of Helicobacter pylori (strain ATCC 700392 / 26695) (Campylobacter pylori).